The chain runs to 390 residues: Phosphopentomutase (390 aa).

Mn(2+) is bound by residues Asp-11, Asp-283, His-288, Asp-324, His-325, and His-336.

Belongs to the phosphopentomutase family. Mn(2+) is required as a cofactor.

It is found in the cytoplasm. The enzyme catalyses 2-deoxy-alpha-D-ribose 1-phosphate = 2-deoxy-D-ribose 5-phosphate. The catalysed reaction is alpha-D-ribose 1-phosphate = D-ribose 5-phosphate. It functions in the pathway carbohydrate degradation; 2-deoxy-D-ribose 1-phosphate degradation; D-glyceraldehyde 3-phosphate and acetaldehyde from 2-deoxy-alpha-D-ribose 1-phosphate: step 1/2. Functionally, isomerase that catalyzes the conversion of deoxy-ribose 1-phosphate (dRib-1-P) and ribose 1-phosphate (Rib-1-P) to deoxy-ribose 5-phosphate (dRib-5-P) and ribose 5-phosphate (Rib-5-P), respectively. This chain is Phosphopentomutase, found in Clostridium novyi (strain NT).